The sequence spans 417 residues: NADH-quinone oxidoreductase subunit D (417 aa).

Belongs to the complex I 49 kDa subunit family. In terms of assembly, NDH-1 is composed of 14 different subunits. Subunits NuoB, C, D, E, F, and G constitute the peripheral sector of the complex.

It is found in the cell inner membrane. It carries out the reaction a quinone + NADH + 5 H(+)(in) = a quinol + NAD(+) + 4 H(+)(out). NDH-1 shuttles electrons from NADH, via FMN and iron-sulfur (Fe-S) centers, to quinones in the respiratory chain. The immediate electron acceptor for the enzyme in this species is believed to be ubiquinone. Couples the redox reaction to proton translocation (for every two electrons transferred, four hydrogen ions are translocated across the cytoplasmic membrane), and thus conserves the redox energy in a proton gradient. The polypeptide is NADH-quinone oxidoreductase subunit D (Francisella tularensis subsp. novicida (strain U112)).